Reading from the N-terminus, the 331-residue chain is Putative heat stress transcription factor A-6a (331 aa).

The interval 135 to 160 (RRGAGTGSTTPRAVNCGGGGGEGEVE) is disordered. A coiled-coil region spans residues 156–238 (EGEVERLRRD…VERKKRRMLA (83 aa)). The interval 162–212 (LRRDKEALARELARLRRQQQEARAQLLDMERRVRGTERRQEQCTEFLARAL) is hydrophobic repeat HR-A/B. A Nuclear localization signal motif is present at residues 230-235 (ERKKRR). The Nuclear export signal motif lies at 246-253 (LTFEALAL). An AHA1 motif is present at residues 270 to 279 (DMIWYELLGE). The AHA2 motif lies at 305 to 313 (AEPWEEMGE).

It belongs to the HSF family. Class A subfamily. As to quaternary structure, homotrimer. In terms of processing, exhibits temperature-dependent phosphorylation.

The protein localises to the cytoplasm. Its subcellular location is the nucleus. Its function is as follows. Transcriptional regulator that specifically binds DNA of heat shock promoter elements (HSE). This Oryza sativa subsp. japonica (Rice) protein is Putative heat stress transcription factor A-6a (HSFA6A).